The following is a 174-amino-acid chain: Large ribosomal subunit protein uL10 (174 aa).

Belongs to the universal ribosomal protein uL10 family. Part of the ribosomal stalk of the 50S ribosomal subunit. The N-terminus interacts with L11 and the large rRNA to form the base of the stalk. The C-terminus forms an elongated spine to which L12 dimers bind in a sequential fashion forming a multimeric L10(L12)X complex.

In terms of biological role, forms part of the ribosomal stalk, playing a central role in the interaction of the ribosome with GTP-bound translation factors. This is Large ribosomal subunit protein uL10 from Anaeromyxobacter dehalogenans (strain 2CP-1 / ATCC BAA-258).